The primary structure comprises 545 residues: G-protein coupled receptor 161 (545 aa).

At 1-46 (MDFVQHALLTASRGALTMSLNSSLSYRKELSNLTATEGGEGGAVSE) the chain is on the extracellular side. 2 N-linked (GlcNAc...) asparagine glycosylation sites follow: asparagine 21 and asparagine 32. The helical transmembrane segment at 47–67 (FIAIIIITVLVCLGNLVIVVT) threads the bilayer. At 68–80 (LYKKSYLLTLSNK) the chain is on the cytoplasmic side. Residues 81 to 101 (FVFSLTLSNFLLSVLVLPFVV) form a helical membrane-spanning segment. The Extracellular segment spans residues 102–117 (TSSIRREWIFGVVWCN). A disulfide bridge links cysteine 116 with cysteine 194. Asparagine 117 is a glycosylation site (N-linked (GlcNAc...) asparagine). Residues 118-139 (FSALLYLLISSASMLTLGVIAI) traverse the membrane as a helical segment. Over 140-159 (DRYYAVLYPMVYPMKITGNR) the chain is Cytoplasmic. Residues 160-180 (AVMALVYIWLHSLIGCLPPLF) form a helical membrane-spanning segment. Over 181–205 (GWSSVEFDEFKWMCVAAWHQEPGYT) the chain is Extracellular. The helical transmembrane segment at 206–226 (IFWQIWCALFPFLIMLVCYGF) threads the bilayer. Over 227–285 (IFRVARVKARKVHCGTVVTVEEDSQRSGRKNSSTSTSSSGSRRNALQGVVYSANQCKAL) the chain is Cytoplasmic. A helical membrane pass occupies residues 286 to 306 (ITILVVIGAFMVTWGPYMVVI). Residues 307 to 322 (TSEALWGKNCVSPTLE) are Extracellular-facing. A helical transmembrane segment spans residues 323 to 343 (TWATWLSFTSAICHPLIYGLW). The Cytoplasmic segment spans residues 344-545 (NKTVRKELLG…EGNVLAAEQR (202 aa)).

This sequence belongs to the G-protein coupled receptor 1 family.

The protein localises to the cell projection. The protein resides in the cilium membrane. It localises to the cell membrane. Key negative regulator of Shh signaling, which promotes the processing of GLI3 into GLI3R during neural tube development. Recruited by TULP3 and the IFT-A complex to primary cilia and acts as a regulator of the PKA-dependent basal repression machinery in Shh signaling by increasing cAMP levels, leading to promote the PKA-dependent processing of GLI3 into GLI3R and repress the Shh signaling. In presence of SHH, it is removed from primary cilia and is internalized into recycling endosomes, preventing its activity and allowing activation of the Shh signaling. Its ligand is unknown. This is G-protein coupled receptor 161 (Gpr161) from Mus musculus (Mouse).